The primary structure comprises 68 residues: Large ribosomal subunit protein uL29 (68 aa).

It belongs to the universal ribosomal protein uL29 family.

The polypeptide is Large ribosomal subunit protein uL29 (Rhodospirillum rubrum (strain ATCC 11170 / ATH 1.1.1 / DSM 467 / LMG 4362 / NCIMB 8255 / S1)).